The primary structure comprises 120 residues: Ribosome-binding factor A (120 aa).

The protein belongs to the RbfA family. Monomer. Binds 30S ribosomal subunits, but not 50S ribosomal subunits or 70S ribosomes.

It is found in the cytoplasm. One of several proteins that assist in the late maturation steps of the functional core of the 30S ribosomal subunit. Associates with free 30S ribosomal subunits (but not with 30S subunits that are part of 70S ribosomes or polysomes). Required for efficient processing of 16S rRNA. May interact with the 5'-terminal helix region of 16S rRNA. The polypeptide is Ribosome-binding factor A (Buchnera aphidicola subsp. Acyrthosiphon pisum (strain 5A)).